The chain runs to 388 residues: Cell adhesion molecule 4 (388 aa).

An N-terminal signal peptide occupies residues 1 to 20 (MGRARRFQWPLLLLWAAAAG). The Ig-like V-type domain occupies 21–119 (PGTGQEVQTE…DTHHQIATLT (99 aa)). Over 25-324 (QEVQTENVTV…VEAQTSVPYA (300 aa)) the chain is Extracellular. N-linked (GlcNAc...) asparagine glycans are attached at residues Asn31 and Asn67. 3 disulfides stabilise this stretch: Cys44–Cys104, Cys145–Cys199, and Cys245–Cys291. Ig-like C2-type domains lie at 124–219 (PENP…YVLD) and 224–307 (PTAR…YVLV). N-linked (GlcNAc...) asparagine glycosylation is present at Asn286. The chain crosses the membrane as a helical span at residues 325-345 (IVGGILALLVFLIICVLVGMV). At 346–388 (WCSVRQKGSYLTHEASGLDEQGEAREAFLNGGDGHKRKEEFFI) the chain is on the cytoplasmic side. Ser361 is modified (phosphoserine).

The protein belongs to the nectin family. Monomer and homodimer. N-glycosylated. In terms of tissue distribution, expressed in the brain and several organs including the kidney and liver.

It localises to the membrane. In terms of biological role, involved in the cell-cell adhesion. Has calcium- and magnesium-independent cell-cell adhesion activity. May have tumor-suppressor activity. This chain is Cell adhesion molecule 4 (Cadm4), found in Mus musculus (Mouse).